Here is a 42-residue protein sequence, read N- to C-terminus: Photosystem I reaction center subunit IX (42 aa).

The helical transmembrane segment at 7-27 threads the bilayer; sequence YLSTAPVLATLWFGFLAGLLI.

It belongs to the PsaJ family.

The protein resides in the plastid. Its subcellular location is the chloroplast thylakoid membrane. Its function is as follows. May help in the organization of the PsaE and PsaF subunits. This chain is Photosystem I reaction center subunit IX, found in Marchantia polymorpha (Common liverwort).